The primary structure comprises 324 residues: NADH-ubiquinone oxidoreductase chain 1 (324 aa).

A run of 8 helical transmembrane segments spans residues 9–29 (VLNP…LTLL), 75–95 (FLFL…WAPM), 106–126 (LGVL…LGSG), 146–166 (ISYE…TGGF), 177–197 (SIWL…STLA), 237–257 (ILLM…IPAL), 259–279 (ELTA…FLWV), and 299–319 (FLPM…ALAG).

This sequence belongs to the complex I subunit 1 family.

The protein localises to the mitochondrion inner membrane. The enzyme catalyses a ubiquinone + NADH + 5 H(+)(in) = a ubiquinol + NAD(+) + 4 H(+)(out). In terms of biological role, core subunit of the mitochondrial membrane respiratory chain NADH dehydrogenase (Complex I) that is believed to belong to the minimal assembly required for catalysis. Complex I functions in the transfer of electrons from NADH to the respiratory chain. The immediate electron acceptor for the enzyme is believed to be ubiquinone. The protein is NADH-ubiquinone oxidoreductase chain 1 (MT-ND1) of Thymallus arcticus (Arctic grayling).